Reading from the N-terminus, the 79-residue chain is Cytochrome b (79 aa).

Helical transmembrane passes span 1 to 7, 31 to 52, and 67 to 79; these read TALFLAM, WLIR…YLHI, and WNIG…LTMM. Heme b contacts are provided by H37 and H51.

It belongs to the cytochrome b family. The cytochrome bc1 complex contains 3 respiratory subunits (MT-CYB, CYC1 and UQCRFS1), 2 core proteins (UQCRC1 and UQCRC2) and probably 6 low-molecular weight proteins. Requires heme b as cofactor.

The protein localises to the mitochondrion inner membrane. In terms of biological role, component of the ubiquinol-cytochrome c reductase complex (complex III or cytochrome b-c1 complex) that is part of the mitochondrial respiratory chain. The b-c1 complex mediates electron transfer from ubiquinol to cytochrome c. Contributes to the generation of a proton gradient across the mitochondrial membrane that is then used for ATP synthesis. In Julidochromis regani (Convict julie), this protein is Cytochrome b (mt-cyb).